The chain runs to 142 residues: Transcription antitermination protein NusB (142 aa).

This sequence belongs to the NusB family.

Its function is as follows. Involved in transcription antitermination. Required for transcription of ribosomal RNA (rRNA) genes. Binds specifically to the boxA antiterminator sequence of the ribosomal RNA (rrn) operons. This chain is Transcription antitermination protein NusB, found in Persephonella marina (strain DSM 14350 / EX-H1).